A 147-amino-acid polypeptide reads, in one-letter code: Large ribosomal subunit protein bL9 (147 aa).

It belongs to the bacterial ribosomal protein bL9 family.

Binds to the 23S rRNA. In Clostridium acetobutylicum (strain ATCC 824 / DSM 792 / JCM 1419 / IAM 19013 / LMG 5710 / NBRC 13948 / NRRL B-527 / VKM B-1787 / 2291 / W), this protein is Large ribosomal subunit protein bL9.